Consider the following 432-residue polypeptide: 3-phosphoshikimate 1-carboxyvinyltransferase (432 aa).

3-phosphoshikimate contacts are provided by Lys25, Ser26, and Arg30. Lys25 contacts phosphoenolpyruvate. Phosphoenolpyruvate-binding residues include Gly97 and Arg125. The 3-phosphoshikimate site is built by Ser170, Gln172, Asp318, and Lys345. Gln172 provides a ligand contact to phosphoenolpyruvate. Asp318 functions as the Proton acceptor in the catalytic mechanism. Phosphoenolpyruvate contacts are provided by Arg349 and Arg393.

Belongs to the EPSP synthase family. In terms of assembly, monomer.

It is found in the cytoplasm. It catalyses the reaction 3-phosphoshikimate + phosphoenolpyruvate = 5-O-(1-carboxyvinyl)-3-phosphoshikimate + phosphate. It participates in metabolic intermediate biosynthesis; chorismate biosynthesis; chorismate from D-erythrose 4-phosphate and phosphoenolpyruvate: step 6/7. Functionally, catalyzes the transfer of the enolpyruvyl moiety of phosphoenolpyruvate (PEP) to the 5-hydroxyl of shikimate-3-phosphate (S3P) to produce enolpyruvyl shikimate-3-phosphate and inorganic phosphate. The chain is 3-phosphoshikimate 1-carboxyvinyltransferase from Geobacillus thermodenitrificans (strain NG80-2).